Reading from the N-terminus, the 488-residue chain is Ribosomal protein uS12 methylthiotransferase RimO (488 aa).

The MTTase N-terminal domain occupies 4 to 120 (RKVHFVSLGC…LGRVLAGDAE (117 aa)). The [4Fe-4S] cluster site is built by cysteine 13, cysteine 49, cysteine 83, cysteine 155, cysteine 159, and cysteine 162. In terms of domain architecture, Radical SAM core spans 141 to 377 (STPGGSAYVK…MTLQRRISHK (237 aa)). Residues 380–448 (AAMIGRELEV…DYDLVGELLD (69 aa)) form the TRAM domain.

It belongs to the methylthiotransferase family. RimO subfamily. [4Fe-4S] cluster is required as a cofactor.

Its subcellular location is the cytoplasm. It catalyses the reaction L-aspartate(89)-[ribosomal protein uS12]-hydrogen + (sulfur carrier)-SH + AH2 + 2 S-adenosyl-L-methionine = 3-methylsulfanyl-L-aspartate(89)-[ribosomal protein uS12]-hydrogen + (sulfur carrier)-H + 5'-deoxyadenosine + L-methionine + A + S-adenosyl-L-homocysteine + 2 H(+). In terms of biological role, catalyzes the methylthiolation of an aspartic acid residue of ribosomal protein uS12. In Sorangium cellulosum (strain So ce56) (Polyangium cellulosum (strain So ce56)), this protein is Ribosomal protein uS12 methylthiotransferase RimO.